A 2969-amino-acid polypeptide reads, in one-letter code: Histone-lysine N-methyltransferase ASH1L (2969 aa).

2 disordered regions span residues 1 to 70 and 118 to 143; these read MDPR…TDAQ and HPRK…RDPS. Over residues 21–31 the composition is skewed to polar residues; the sequence is KSPSAISTGTL. S22 bears the Phosphoserine mark. Composition is skewed to basic and acidic residues over residues 33–65 and 127–143; these read SKRE…KDDG and KMTD…RDPS. A Glycyl lysine isopeptide (Lys-Gly) (interchain with G-Cter in SUMO2) cross-link involves residue K34. Residue K375 is modified to N6-acetyllysine. K425 is covalently cross-linked (Glycyl lysine isopeptide (Lys-Gly) (interchain with G-Cter in SUMO2)). Residues 501 to 511 show a composition bias toward polar residues; the sequence is IQQDSFSSSEK. Disordered stretches follow at residues 501–525, 537–583, 824–845, 878–966, 1100–1128, 1151–1231, and 1243–1281; these read IQQD…QPPV, ASDV…PNPL, YKPK…PPKR, KQGL…EMEP, SEIL…AGFV, MKKA…EHVS, and SLKE…QLRN. A compositionally biased stretch (basic and acidic residues) spans 512–522; that stretch reads GSYETSKHEKQ. Positions 554-579 are enriched in polar residues; it reads NLPSPSPTVSVNPLTRSPPETSSQLA. A compositionally biased stretch (basic residues) spans 887 to 897; that stretch reads PKKRGRPKRQM. Positions 887 to 899 form a DNA-binding region, a.T hook 1; that stretch reads PKKRGRPKRQMRS. The span at 920–932 shows a compositional bias: basic and acidic residues; sequence SKLESESDNHRSS. Acidic residues predominate over residues 936–949; sequence FESEDQLQDPDDLD. Low complexity-rich tracts occupy residues 1100 to 1123 and 1162 to 1175; these read SEIL…PVSS and SPPT…SHLS. A phosphoserine mark is found at S1162 and S1170. Positions 1186–1211 are enriched in polar residues; that stretch reads SPISESHSDETIPSDSGIGTDNNSTS. Residue Q1220 is modified to N5-methylglutamine. 2 stretches are compositionally biased toward basic residues: residues 1246–1256 and 1266–1277; these read EKHKHKCKRRN and KRQKRKRKKKYP. A DNA-binding region (a.T hook 2) is located at residues 1347–1359; it reads KKKRGRPPKMREA. Disordered regions lie at residues 1489-1508, 1580-1711, and 1741-1761; these read HREH…GSSR, SESS…ASGD, and ASAP…TLGK. Composition is skewed to polar residues over residues 1496-1508, 1580-1598, 1605-1622, and 1650-1680; these read EQPQ…GSSR, SESS…SEPA, NLFT…PNSS, and LPSN…STNC. Low complexity predominate over residues 1741-1751; the sequence is ASAPPSSSPGR. Positions 1847–1859 form a DNA-binding region, a.T hook 3; sequence KRRPGRPRKCPLQ. The disordered stretch occupies residues 1911 to 1991; it reads KKGLKRKGWL…PRPPKKKYQK (81 aa). The interval 2069 to 2288 is catalytic domain; sequence PDVPLYKKIR…KCRGIIGGKS (220 aa). Positions 2091–2142 constitute an AWS domain; that stretch reads YEATTCNCKKPDDDTRKGCVDDCLNRMIFAECSPNTCPCGEQCCNQRIQRHE. Residues 2145-2261 form the SET domain; sequence QCLERFRAEE…AGTELTYDYN (117 aa). Positions 2269–2285 constitute a Post-SET domain; it reads KQQLCKCGFEKCRGIIG. Positions 2288 to 2346 are disordered; the sequence is SQRVNGLTSSKNSQPMATHKKSGRSKEKRKSKHKLKKRRGHLSEEPSENINTPTRLTPQ. The span at 2289–2303 shows a compositional bias: polar residues; it reads QRVNGLTSSKNSQPM. The segment covering 2305–2327 has biased composition (basic residues); it reads THKKSGRSKEKRKSKHKLKKRRG. N6-acetyllysine occurs at positions 2317, 2319, and 2323. The segment covering 2335 to 2346 has biased composition (polar residues); sequence ENINTPTRLTPQ. A Bromo domain is found at 2444–2550; the sequence is RLAQIFKEIC…KAYYNARHEA (107 aa). The segment at 2585-2631 adopts a PHD-type zinc-finger fold; sequence VIRCICGLYKDEGLMIQCDKCMVWQHCDCMGVNSDVEHYLCEQCDPR. Positions 2661–2798 constitute a BAH domain; the sequence is LLLRQGDCVY…KSAHLFYKIH (138 aa). Disordered regions lie at residues 2825–2856 and 2876–2919; these read SPHY…DLGQ and NEIP…RRHN. The span at 2842-2855 shows a compositional bias: basic and acidic residues; it reads WKSERSKPPLKDLG.

This sequence belongs to the class V-like SAM-binding methyltransferase superfamily. Histone-lysine methyltransferase family. SET2 subfamily. Post-translationally, methylated at Gln-1220 by N6AMT1. Widely expressed, with highest level in brain, heart and kidney.

Its subcellular location is the nucleus. The protein localises to the cell junction. It is found in the tight junction. It localises to the chromosome. The catalysed reaction is L-lysyl(36)-[histone H3] + 3 S-adenosyl-L-methionine = N(6),N(6),N(6)-trimethyl-L-lysyl(36)-[histone H3] + 3 S-adenosyl-L-homocysteine + 3 H(+). It carries out the reaction L-lysyl(9)-[histone H3] + S-adenosyl-L-methionine = N(6)-methyl-L-lysyl(9)-[histone H3] + S-adenosyl-L-homocysteine + H(+). Its function is as follows. Histone methyltransferase specifically trimethylating 'Lys-36' of histone H3 forming H3K36me3. Also monomethylates 'Lys-9' of histone H3 (H3K9me1) in vitro. The physiological significance of the H3K9me1 activity is unclear. This Homo sapiens (Human) protein is Histone-lysine N-methyltransferase ASH1L (ASH1L).